A 130-amino-acid polypeptide reads, in one-letter code: Small ribosomal subunit protein uS8 (130 aa).

The protein belongs to the universal ribosomal protein uS8 family. As to quaternary structure, part of the 30S ribosomal subunit. Contacts proteins S5 and S12.

One of the primary rRNA binding proteins, it binds directly to 16S rRNA central domain where it helps coordinate assembly of the platform of the 30S subunit. This chain is Small ribosomal subunit protein uS8, found in Ruegeria pomeroyi (strain ATCC 700808 / DSM 15171 / DSS-3) (Silicibacter pomeroyi).